The primary structure comprises 449 residues: Chromogranin-A (449 aa).

The N-terminal stretch at 1-18 is a signal peptide; sequence MRSAAVLALLLCAGQVIA. Cysteines 35 and 56 form a disulfide. Residues 87-431 form a disordered region; sequence AKERTHQQKK…EDQELESLSA (345 aa). A Phosphoserine modification is found at Ser-99. Residues 107–140 are compositionally biased toward basic and acidic residues; the sequence is VLEKPNDQAEPKEVTEEVSSKDAAEKRDDFKEVE. Ser-142 is subject to Phosphoserine. Ser-185 carries O-linked (GalNAc...) serine glycosylation. Residue Tyr-191 is modified to Phosphotyrosine. Ser-200 is modified (phosphoserine). Ser-204 is a glycosylation site (O-linked (GalNAc...) serine). Position 215 is a phosphoserine (Ser-215). The span at 233 to 242 shows a compositional bias: basic and acidic residues; that stretch reads EAEAREKAVP. O-linked (GalNAc...) threonine glycosylation is present at Thr-249. The span at 279–297 shows a compositional bias: basic and acidic residues; that stretch reads GAEEAKPPEGKGEWAHSRQ. Ser-295 carries the phosphoserine modification. Gly-312 bears the Glycine amide mark. Residues Ser-315, Ser-325, and Ser-363 each carry the phosphoserine modification. Positions 323 to 351 are enriched in basic and acidic residues; that stretch reads QLSKEWEDAKRWSKMDQLAKELTAEKRLE. Met-364 carries the post-translational modification Methionine sulfoxide. Phosphoserine is present on residues Ser-390, Ser-394, Ser-416, and Ser-430. A compositionally biased stretch (basic and acidic residues) spans 406–423; that stretch reads YPEEKKEEEGSANRRPED. Ser-416 carries O-linked (Xyl...) (chondroitin sulfate) serine glycosylation.

The protein belongs to the chromogranin/secretogranin protein family. Self-interacts; self-assembly is promoted in vitro by chondroitin sulfate attachment which occurs at mildly acidic pH conditions. Interacts with SCG3. Interacts with ITPR1 in the secretory granules. Post-translationally, in secretory granules, is attacked at both N- and C-terminal sides by proteolytic enzymes generating numerous peptides of various activities. Proteolytic processing can give rise to additional longer forms of catestatin peptides which display a less potent catecholamine release-inhibitory activity. In terms of processing, O-glycosylated; contains chondroitin sulfate (CS). CS attachment is pH-dependent, being observed at mildly acidic conditions of pH 5 but not at neutral pH, and promotes self-assembly in vitro. As to expression, highest concentration of GE-25 found in adrenal medulla with lower levels present in the pituitary, the intestinal mucosa and the pancreas. Also found in the brain.

It localises to the secreted. Its subcellular location is the cytoplasmic vesicle. The protein resides in the secretory vesicle. The protein localises to the neuronal dense core vesicle. Its function is as follows. Strongly inhibits glucose induced insulin release from the pancreas. Completely inhibits catecholamine release from chromaffin cells. Functionally, has antibacterial activity against M.luteus. Not active against E.coli. In terms of biological role, inhibits catecholamine release from chromaffin cells and noradrenergic neurons by acting as a non-competitive nicotinic cholinergic antagonist. Displays antibacterial activity against Gram-positive bacteria M.luteus and B.megaterium, and Gram-negative bacteria E.coli, and antifungal activity against a variety of filamentous fungi including A.fumigatus, N.hematococca, F.culmorum, F.oxyporum, T.mentagrophytes and several forms of Candida: C.albicans, C.tropicalis, C.glabrata and C.neoform. Can induce mast cell migration, degranulation and production of cytokines and chemokines. Its function is as follows. Has antibacterial activity against Gram-positive bacteria M.luteus, B.megaterium. Not active against Gram-positive bacteria B.cereus, B.subtilis, S.pyogenes, M.fortuitum, S.aureus and L.monocytogenes and against Gram-negative bacteria E.coli, E.cloacae, S.typhimurium, K.pneumoniae and P.aeruginosa. Possesses antifungal activity against N.crassa, A.fumigatus, A.brassicicola, N.hematococca, F.culmorum and F.oxyporum and against the yeast S.cerevisiae and C.albicans. Inactive against A.benhamiae. Has antifungal activity against N.crassa, A.fumigatus, A.brassicicola, N.hematococca, F.culmorum, F.oxyporum, A.benhamiae, C.neoformans, as well as against yeasts C.albicans, and C.tropicalis. Seems to be inactive against C.glabrata. Interacts with the fungal cell wall, crosses the plasma membrane and accumulates in fungal cells where it inhibits calcineurin activity. Functionally, regulates granule biogenesis in endocrine cells by up-regulating the transcription of protease nexin 1 (SERPINE2) via a cAMP-PKA-SP1 pathway. This leads to inhibition of granule protein degradation in the Golgi complex which in turn promotes granule formation. The sequence is that of Chromogranin-A (CHGA) from Bos taurus (Bovine).